Consider the following 319-residue polypeptide: Mitochondrial fission regulator 1-like-A (319 aa).

Residues 1–37 (MASLGAAAEPERNLFGKDEAEAYESPEGRRSGRKKRT) are disordered. Basic and acidic residues predominate over residues 9-30 (EPERNLFGKDEAEAYESPEGRR).

The protein belongs to the MTFR1 family.

Its subcellular location is the mitochondrion outer membrane. Its function is as follows. Mitochondrial protein required for adaptation of miochondrial dynamics to metabolic changes. Regulates mitochondrial morphology at steady state and mediates AMPK-dependent stress-induced mitochondrial fragmentation via the control of OPA1 levels. The sequence is that of Mitochondrial fission regulator 1-like-A (mtfr1l-a) from Xenopus laevis (African clawed frog).